Reading from the N-terminus, the 81-residue chain is Small ribosomal subunit protein bS16 (81 aa).

The protein belongs to the bacterial ribosomal protein bS16 family.

The sequence is that of Small ribosomal subunit protein bS16 from Clostridium botulinum (strain Eklund 17B / Type B).